We begin with the raw amino-acid sequence, 530 residues long: GMP synthase [glutamine-hydrolyzing] (530 aa).

The Glutamine amidotransferase type-1 domain occupies 4 to 205 (RILILDYGSQ…VKDICGCEGD (202 aa)). Catalysis depends on cysteine 84, which acts as the Nucleophile. Catalysis depends on residues histidine 179 and glutamate 181. The region spanning 206–398 (WNMPDYISEA…LGLPPQMVYR (193 aa)) is the GMPS ATP-PPase domain. 233–239 (SGGVDSS) provides a ligand contact to ATP.

As to quaternary structure, homodimer.

The catalysed reaction is XMP + L-glutamine + ATP + H2O = GMP + L-glutamate + AMP + diphosphate + 2 H(+). The protein operates within purine metabolism; GMP biosynthesis; GMP from XMP (L-Gln route): step 1/1. Its function is as follows. Catalyzes the synthesis of GMP from XMP. This is GMP synthase [glutamine-hydrolyzing] from Bordetella bronchiseptica (strain ATCC BAA-588 / NCTC 13252 / RB50) (Alcaligenes bronchisepticus).